The chain runs to 207 residues: Thymidylate kinase (207 aa).

Position 7–14 (7–14 (GCEGTGKT)) interacts with ATP.

It belongs to the thymidylate kinase family.

It catalyses the reaction dTMP + ATP = dTDP + ADP. Functionally, phosphorylation of dTMP to form dTDP in both de novo and salvage pathways of dTTP synthesis. This Onion yellows phytoplasma (strain OY-M) protein is Thymidylate kinase.